The sequence spans 274 residues: Large ribosomal subunit protein uL2 (274 aa).

Residues G222–G274 are disordered. A compositionally biased stretch (basic and acidic residues) spans D229–G239.

This sequence belongs to the universal ribosomal protein uL2 family. In terms of assembly, part of the 50S ribosomal subunit. Forms a bridge to the 30S subunit in the 70S ribosome.

Its function is as follows. One of the primary rRNA binding proteins. Required for association of the 30S and 50S subunits to form the 70S ribosome, for tRNA binding and peptide bond formation. It has been suggested to have peptidyltransferase activity; this is somewhat controversial. Makes several contacts with the 16S rRNA in the 70S ribosome. This is Large ribosomal subunit protein uL2 from Thermosipho africanus (strain TCF52B).